The sequence spans 351 residues: Porphobilinogen deaminase (351 aa).

Cysteine 242 carries the post-translational modification S-(dipyrrolylmethanemethyl)cysteine.

It belongs to the HMBS family. In terms of assembly, monomer. It depends on dipyrromethane as a cofactor.

The catalysed reaction is 4 porphobilinogen + H2O = hydroxymethylbilane + 4 NH4(+). It participates in porphyrin-containing compound metabolism; protoporphyrin-IX biosynthesis; coproporphyrinogen-III from 5-aminolevulinate: step 2/4. In terms of biological role, tetrapolymerization of the monopyrrole PBG into the hydroxymethylbilane pre-uroporphyrinogen in several discrete steps. The polypeptide is Porphobilinogen deaminase (Rickettsia rickettsii (strain Sheila Smith)).